The chain runs to 368 residues: Zinc finger protein 24 (368 aa).

Residue K22 forms a Glycyl lysine isopeptide (Lys-Gly) (interchain with G-Cter in SUMO2) linkage. A Glycyl lysine isopeptide (Lys-Gly) (interchain with G-Cter in SUMO1); alternate cross-link involves residue K27. K27 is covalently cross-linked (Glycyl lysine isopeptide (Lys-Gly) (interchain with G-Cter in SUMO2); alternate). An SCAN box domain is found at 52-134 (RQRFRQFGYQ…TVLEDLESEL (83 aa)). Phosphoserine is present on residues S132 and S142. Glycyl lysine isopeptide (Lys-Gly) (interchain with G-Cter in SUMO2) cross-links involve residues K147, K177, and K236. The C2H2-type 1 zinc finger occupies 251-273 (HICDECGKHFSQGSALILHQRIH). The necessary and sufficient for nuclear localization stretch occupies residues 251–301 (HICDECGKHFSQGSALILHQRIHSGEKPYGCVECGKAFSRSSILVQHQRVH). Residue S274 is modified to Phosphoserine. Glycyl lysine isopeptide (Lys-Gly) (interchain with G-Cter in SUMO2) cross-links involve residues K277 and K286. C2H2-type zinc fingers lie at residues 279–301 (YGCV…QRVH), 307–329 (YKCL…QRIH), and 335–357 (YECV…QRRH). The residue at position 292 (S292) is a Phosphoserine. Residue Y335 is modified to Phosphotyrosine. Residues K361 and K367 each participate in a glycyl lysine isopeptide (Lys-Gly) (interchain with G-Cter in SUMO2) cross-link.

Belongs to the krueppel C2H2-type zinc-finger protein family. Post-translationally, sumoylated.

It localises to the nucleus. Functionally, transcription factor required for myelination of differentiated oligodendrocytes. Required for the conversion of oligodendrocytes from the premyelinating to the myelinating state. In the developing central nervous system (CNS), involved in the maintenance in the progenitor stage by promoting the cell cycle. Specifically binds to the 5'-TCAT-3' DNA sequence. Has transcription repressor activity in vitro. This Pongo abelii (Sumatran orangutan) protein is Zinc finger protein 24 (ZNF24).